An 840-amino-acid chain; its full sequence is Mechanosensitive ion channel protein Msy2 (840 aa).

The Cytoplasmic portion of the chain corresponds to 1–68 (MNEHRREPHR…WFNNLSFITR (68 aa)). A helical membrane pass occupies residues 69-89 (WITIWFPLAGALVIPLAVGVS). Topologically, residues 90–100 (PYPNAKLGGVR) are lumenal. The helical transmembrane segment at 101–121 (IFWIFVWLEVAWGGFWVSRVI) threads the bilayer. Topologically, residues 122–126 (ARLLP) are cytoplasmic. The helical transmembrane segment at 127 to 147 (YILYPLMGILPFTMYKYTVIL) threads the bilayer. Topologically, residues 148–151 (TALE) are lumenal. A helical transmembrane segment spans residues 152-172 (MPLAIFFCSIVCVCTFSPIMI). At 173–225 (GKGNFTSTTVTTTTSATATPTASASSNAVESVFVTKTAASVPSWIKVITKILG) the chain is on the cytoplasmic side. A helical transmembrane segment spans residues 226–246 (AAVVTSIVLLLEKIFLHFIGF). Topologically, residues 247–449 (HYHEVQYQYR…LALGKLDRVG (203 aa)) are lumenal. One can recognise an EF-hand domain in the interval 392 to 427 (IPDDEINDIFHILDNDYSRTVTLDEMEQFTREISIE). Residues 450-491 (LGVVGIIAVLTFISFLDTSFATILAAFGTTLLSLSFVFSTSA) form a helical membrane-spanning segment. Residues 492–840 (QELMSSIIFL…SQNMDGQIQY (349 aa)) lie on the Cytoplasmic side of the membrane. Disordered regions lie at residues 677-730 (EYSK…KRED) and 775-819 (ESNG…NTQA). Over residues 688 to 700 (SDISSTASSNSLS) the composition is skewed to low complexity. Positions 708–730 (SESRNYHTHDEDNSSDDNHKRED) are enriched in basic and acidic residues. Residues 776-819 (SNGNANGDNTATNSQGATDNGQTTTNTTQNNVDNTQATTDNTQA) show a composition bias toward low complexity.

Belongs to the MscS (TC 1.A.23) family.

Its subcellular location is the endoplasmic reticulum membrane. Its function is as follows. Regulates intracellular calcium levels and cell volume for survival in response to hypo-osmotic shock. Involved in maintaining vacuole integrity and protecting the nuclear envelope upon hypo-osmotic shock. The chain is Mechanosensitive ion channel protein Msy2 from Schizosaccharomyces pombe (strain 972 / ATCC 24843) (Fission yeast).